Here is a 321-residue protein sequence, read N- to C-terminus: Urease accessory protein UreD (321 aa).

This sequence belongs to the UreD family. UreD, UreF and UreG form a complex that acts as a GTP-hydrolysis-dependent molecular chaperone, activating the urease apoprotein by helping to assemble the nickel containing metallocenter of UreC. The UreE protein probably delivers the nickel.

Its subcellular location is the cytoplasm. Required for maturation of urease via the functional incorporation of the urease nickel metallocenter. The protein is Urease accessory protein UreD of Yersinia pseudotuberculosis serotype O:1b (strain IP 31758).